The chain runs to 408 residues: Glyceraldehyde-3-phosphate dehydrogenase, testis-specific (408 aa).

The segment at methionine 1 to alanine 73 is testis-specific N-terminal extension. Residues glutamine 19–lysine 68 form a disordered region. A compositionally biased stretch (pro residues) spans proline 53–lysine 68. NAD(+) contacts are provided by residues arginine 85–isoleucine 86, aspartate 106, lysine 151, tyrosine 173, and serine 193. D-glyceraldehyde 3-phosphate-binding positions include serine 223–threonine 225, threonine 254, threonine 283–glycine 284, and arginine 306. Catalysis depends on cysteine 224, which acts as the Nucleophile. Residue asparagine 388 coordinates NAD(+).

It belongs to the glyceraldehyde-3-phosphate dehydrogenase family. Homotetramer. Interacts with ARRB2; the interaction is detected in the nucleus upon OR1D2 stimulation. As to expression, testis specific.

The protein resides in the cytoplasm. The catalysed reaction is D-glyceraldehyde 3-phosphate + phosphate + NAD(+) = (2R)-3-phospho-glyceroyl phosphate + NADH + H(+). The protein operates within carbohydrate degradation; glycolysis; pyruvate from D-glyceraldehyde 3-phosphate: step 1/5. Functionally, may play an important role in regulating the switch between different pathways for energy production during spermiogenesis and in the spermatozoon. Required for sperm motility and male fertility. This chain is Glyceraldehyde-3-phosphate dehydrogenase, testis-specific (GAPDHS), found in Homo sapiens (Human).